Reading from the N-terminus, the 642-residue chain is 1,4-alpha-glucan branching enzyme GlgB (642 aa).

D304 serves as the catalytic Nucleophile. Residue E355 is the Proton donor of the active site.

Belongs to the glycosyl hydrolase 13 family. GlgB subfamily. In terms of assembly, monomer.

It catalyses the reaction Transfers a segment of a (1-&gt;4)-alpha-D-glucan chain to a primary hydroxy group in a similar glucan chain.. It functions in the pathway glycan biosynthesis; glycogen biosynthesis. Catalyzes the formation of the alpha-1,6-glucosidic linkages in glycogen by scission of a 1,4-alpha-linked oligosaccharide from growing alpha-1,4-glucan chains and the subsequent attachment of the oligosaccharide to the alpha-1,6 position. In Streptococcus pneumoniae serotype 2 (strain D39 / NCTC 7466), this protein is 1,4-alpha-glucan branching enzyme GlgB.